A 106-amino-acid chain; its full sequence is Pyruvate decarboxylase 2 (106 aa).

Mg(2+) contacts are provided by N10 and G12.

It belongs to the TPP enzyme family. As to quaternary structure, homotetramer. Requires a metal cation as cofactor. Thiamine diphosphate is required as a cofactor.

It carries out the reaction a 2-oxocarboxylate + H(+) = an aldehyde + CO2. This chain is Pyruvate decarboxylase 2 (PDC2), found in Zea mays (Maize).